Reading from the N-terminus, the 224-residue chain is Haloacetate dehalogenase H-2 (224 aa).

The Nucleophile role is filled by D10.

It belongs to the HAD-like hydrolase superfamily. S-2-haloalkanoic acid dehalogenase family.

It carries out the reaction a haloacetate + H2O = a halide anion + glycolate + H(+). The chain is Haloacetate dehalogenase H-2 (dehH2) from Moraxella sp. (strain B).